The sequence spans 277 residues: Putative hydro-lyase SCO1412 (277 aa).

It belongs to the D-glutamate cyclase family.

This chain is Putative hydro-lyase SCO1412, found in Streptomyces coelicolor (strain ATCC BAA-471 / A3(2) / M145).